The following is a 210-amino-acid chain: MTDLAQKELMVQLGRSFYERGYTVGGAGNLSVRLDDNRVLVTPTGSSLGRLSVERLSVLDMEGNLLGGDKPSKEAVFHLAMYKKNPECKAIVHLHSTYLTALSCLDNLDPNNAIEPFTPYYVMRVGKMQVIPYYRPGSPKIAEELSNRALTGKAFLLANHGVVVTGSDLLDAADNTEELEETAKLFFTLQGQKIRYLTDTEVKDLENRGK.

Residue E74 is the Proton acceptor of the active site. Zn(2+)-binding residues include E74, H93, and H95. Catalysis depends on Y120, which acts as the Proton donor. Residue H160 participates in Zn(2+) binding.

This sequence belongs to the aldolase class II family. AraD/FucA subfamily. Requires Zn(2+) as cofactor.

The catalysed reaction is 3-dehydro-4-O-phospho-D-erythronate + H(+) = dihydroxyacetone phosphate + CO2. The enzyme catalyses 3-dehydro-4-O-phospho-L-erythronate + H(+) = dihydroxyacetone phosphate + CO2. In terms of biological role, catalyzes the decarboxylation of 3-oxo-tetronate 4-phosphate to dihydroxyacetone phosphate (DHAP) and CO(2). The polypeptide is 3-oxo-tetronate 4-phosphate decarboxylase (Haemophilus influenzae (strain ATCC 51907 / DSM 11121 / KW20 / Rd)).